The primary structure comprises 261 residues: Type III pantothenate kinase (261 aa).

6–13 (DAGNSNIT) is a binding site for ATP. Substrate-binding positions include Tyr-100 and 107–110 (GADR). Asp-109 serves as the catalytic Proton acceptor. A K(+)-binding site is contributed by Asp-129. Thr-132 provides a ligand contact to ATP. Substrate is bound at residue Thr-184.

It belongs to the type III pantothenate kinase family. In terms of assembly, homodimer. Requires NH4(+) as cofactor. It depends on K(+) as a cofactor.

Its subcellular location is the cytoplasm. It catalyses the reaction (R)-pantothenate + ATP = (R)-4'-phosphopantothenate + ADP + H(+). The protein operates within cofactor biosynthesis; coenzyme A biosynthesis; CoA from (R)-pantothenate: step 1/5. Catalyzes the phosphorylation of pantothenate (Pan), the first step in CoA biosynthesis. The protein is Type III pantothenate kinase of Solibacter usitatus (strain Ellin6076).